Reading from the N-terminus, the 273-residue chain is 29 kDa ribonucleoprotein A, chloroplastic (273 aa).

The transit peptide at 1–58 (MASSASSLHFLSLTPQTLPLPKPTSQTTSLSFFSLPPSSLNLSLSSSSSCFSSRFVRK) directs the protein to the chloroplast. The 79-residue stretch at 87 to 165 (LKIFVGNLPF…RALRVNSGPP (79 aa)) folds into the RRM 1 domain. Residues 156–181 (RALRVNSGPPPEKRENSSFRGGSRGG) form a disordered region. The tract at residues 166–187 (PEKRENSSFRGGSRGGGSFDSS) is linker (Gly-rich). The RRM 2 domain occupies 188 to 266 (NRVYVGNLAW…RAIRVSPAEA (79 aa)).

It localises to the plastid. Its subcellular location is the chloroplast. Its function is as follows. Could be involved in splicing and/or processing of chloroplast RNA's. This Nicotiana sylvestris (Wood tobacco) protein is 29 kDa ribonucleoprotein A, chloroplastic.